We begin with the raw amino-acid sequence, 552 residues long: Chaperonin GroEL (552 aa).

ATP is bound by residues 30 to 33 (TLGP), Lys51, 87 to 91 (DGTTT), Gly415, 480 to 482 (NAA), and Asp496.

It belongs to the chaperonin (HSP60) family. In terms of assembly, forms a cylinder of 14 subunits composed of two heptameric rings stacked back-to-back. Interacts with the co-chaperonin GroES.

The protein resides in the cytoplasm. It carries out the reaction ATP + H2O + a folded polypeptide = ADP + phosphate + an unfolded polypeptide.. In terms of biological role, together with its co-chaperonin GroES, plays an essential role in assisting protein folding. The GroEL-GroES system forms a nano-cage that allows encapsulation of the non-native substrate proteins and provides a physical environment optimized to promote and accelerate protein folding. The sequence is that of Chaperonin GroEL from Coxiella burnetii (strain RSA 493 / Nine Mile phase I).